A 331-amino-acid chain; its full sequence is dTDP-glucose 4,6-dehydratase (331 aa).

Residues 11-12 (FI), 33-36 (DALT), 57-58 (DI), 77-81 (FAAES), and Thr96 contribute to the NAD(+) site. Ser81 serves as a coordination point for substrate. Residue Thr120 participates in substrate binding. Residue Asp121 is the Proton donor of the active site. Catalysis depends on proton acceptor residues Glu122 and Tyr147. An NAD(+)-binding site is contributed by 147 to 151 (YSATK). Residue Asn176 coordinates substrate. Asn177 is a binding site for NAD(+). Residues 186-191 (KFIPRQ), 202-204 (KLY), Arg211, Asn246, and 269-273 (DRVGH) contribute to the substrate site.

It belongs to the NAD(P)-dependent epimerase/dehydratase family. dTDP-glucose dehydratase subfamily. Homodimer. Requires NAD(+) as cofactor.

It catalyses the reaction dTDP-alpha-D-glucose = dTDP-4-dehydro-6-deoxy-alpha-D-glucose + H2O. It functions in the pathway carbohydrate biosynthesis; dTDP-L-rhamnose biosynthesis. Functionally, catalyzes the dehydration of dTDP-D-glucose to form dTDP-6-deoxy-D-xylo-4-hexulose via a three-step process involving oxidation, dehydration and reduction. Involved in the biosynthesis of the dTDP-L-rhamnose which is a component of the critical linker, D-N-acetylglucosamine-L-rhamnose disaccharide, which connects the galactan region of arabinogalactan to peptidoglycan via a phosphodiester linkage. The polypeptide is dTDP-glucose 4,6-dehydratase (rmlB) (Mycobacterium tuberculosis (strain CDC 1551 / Oshkosh)).